A 421-amino-acid chain; its full sequence is MIALFRRSCGVLRSLSHFDWRSQHTKTALQREPGSGFSFEFTEQQKEFQATARKFAREEIIPLAAEYDKTGEYPVPLIKRAWELGLMNTHIPESCGGLGLGTFDSCLISEELAYGCTGVQTAIEANSLGQMPVIIAGNDQQQKKYLGRMTEEPLMCAYCVTEPVAGSDVAGIKTKAEKKGDEYIINGQKMWITNGGKANWYFLLARSDPDPKAPASKAFTGFIVEADTPGVQIGRKELNMGQRCSDTRGIVFEDVRVPKENVLIGEGAGFKIAMGAFDKTRPPVAAAAVGLAQRALDEATKYALERKTFGKLLIEHQGISFLLAEMAMKVELARLSYQRAAWEVDSGRRNTYYASIAKAYAGDIANQLASDAVQIFGGNGFNTEYPVEKLMRDAKIYQIYEGTAQIQRLIIAREHIGRYKK.

The N-terminal 25 residues, 1 to 25, are a transit peptide targeting the mitochondrion; it reads MIALFRRSCGVLRSLSHFDWRSQHT. Lys69 bears the N6-acetyllysine; alternate mark. Lys69 is modified (N6-succinyllysine; alternate). Lys79 is modified (N6-acetyllysine). An FAD-binding site is contributed by 158 to 167; it reads YCVTEPVAGS. Position 167 (Ser167) interacts with octanoyl-CoA. Residue Lys179 is modified to N6-succinyllysine. Position 191-193 (191-193) interacts with FAD; the sequence is WIT. At Lys212 the chain carries N6-acetyllysine; alternate. Position 212 is an N6-succinyllysine; alternate (Lys212). Ser216 contacts octanoyl-CoA. Residues Lys217, Lys259, and Lys271 each carry the N6-acetyllysine; alternate modification. N6-succinyllysine; alternate occurs at positions 217, 259, and 271. Asp278 contacts octanoyl-CoA. Lys279 bears the N6-acetyllysine mark. Position 281 (Arg281) interacts with octanoyl-CoA. Lys301 carries the N6-acetyllysine modification. FAD-binding positions include 306–308 and 316–317; these read RKT and HQ. Octanoyl-CoA-binding residues include Arg349 and Thr351. Thr351 bears the Phosphothreonine mark. 374–378 lines the FAD pocket; the sequence is QIFGG. Glu401 is an octanoyl-CoA binding site. The Proton acceptor role is filled by Glu401. An FAD-binding site is contributed by 402–405; sequence GTAQ.

This sequence belongs to the acyl-CoA dehydrogenase family. In terms of assembly, homotetramer. Interacts with the heterodimeric electron transfer flavoprotein ETF. The cofactor is FAD. Acetylated. Could occur at proximity of the cofactor-binding sites and reduce the catalytic activity. Could be deacetylated by SIRT3.

The protein resides in the mitochondrion matrix. It carries out the reaction a medium-chain 2,3-saturated fatty acyl-CoA + oxidized [electron-transfer flavoprotein] + H(+) = a medium-chain (2E)-enoyl-CoA + reduced [electron-transfer flavoprotein]. The enzyme catalyses pentanoyl-CoA + oxidized [electron-transfer flavoprotein] + H(+) = (2E)-pentenoyl-CoA + reduced [electron-transfer flavoprotein]. It catalyses the reaction hexanoyl-CoA + oxidized [electron-transfer flavoprotein] + H(+) = (2E)-hexenoyl-CoA + reduced [electron-transfer flavoprotein]. The catalysed reaction is octanoyl-CoA + oxidized [electron-transfer flavoprotein] + H(+) = (2E)-octenoyl-CoA + reduced [electron-transfer flavoprotein]. It carries out the reaction decanoyl-CoA + oxidized [electron-transfer flavoprotein] + H(+) = (2E)-decenoyl-CoA + reduced [electron-transfer flavoprotein]. The enzyme catalyses dodecanoyl-CoA + oxidized [electron-transfer flavoprotein] + H(+) = (2E)-dodecenoyl-CoA + reduced [electron-transfer flavoprotein]. It catalyses the reaction tetradecanoyl-CoA + oxidized [electron-transfer flavoprotein] + H(+) = (2E)-tetradecenoyl-CoA + reduced [electron-transfer flavoprotein]. The catalysed reaction is oxidized [electron-transfer flavoprotein] + hexadecanoyl-CoA + H(+) = (2E)-hexadecenoyl-CoA + reduced [electron-transfer flavoprotein]. Its pathway is lipid metabolism; mitochondrial fatty acid beta-oxidation. In terms of biological role, medium-chain specific acyl-CoA dehydrogenase is one of the acyl-CoA dehydrogenases that catalyze the first step of mitochondrial fatty acid beta-oxidation, an aerobic process breaking down fatty acids into acetyl-CoA and allowing the production of energy from fats. The first step of fatty acid beta-oxidation consists in the removal of one hydrogen from C-2 and C-3 of the straight-chain fatty acyl-CoA thioester, resulting in the formation of trans-2-enoyl-CoA. Electron transfer flavoprotein (ETF) is the electron acceptor that transfers electrons to the main mitochondrial respiratory chain via ETF-ubiquinone oxidoreductase (ETF dehydrogenase). Among the different mitochondrial acyl-CoA dehydrogenases, medium-chain specific acyl-CoA dehydrogenase acts specifically on acyl-CoAs with saturated 6 to 12 carbons long primary chains. The polypeptide is Medium-chain specific acyl-CoA dehydrogenase, mitochondrial (Bos taurus (Bovine)).